A 607-amino-acid polypeptide reads, in one-letter code: Glutamine--fructose-6-phosphate aminotransferase [isomerizing] (607 aa).

The active-site Nucleophile; for GATase activity is Cys-2. Residues 2–217 (CGIIGILGKR…DGDWAVLTRE (216 aa)) enclose the Glutamine amidotransferase type-2 domain. 2 consecutive SIS domains span residues 277–422 (TVRS…QRGF) and 455–597 (ICRN…VDQP). The active-site For Fru-6P isomerization activity is the Lys-602.

As to quaternary structure, homodimer.

It is found in the cytoplasm. The enzyme catalyses D-fructose 6-phosphate + L-glutamine = D-glucosamine 6-phosphate + L-glutamate. In terms of biological role, catalyzes the first step in hexosamine metabolism, converting fructose-6P into glucosamine-6P using glutamine as a nitrogen source. The sequence is that of Glutamine--fructose-6-phosphate aminotransferase [isomerizing] from Bartonella henselae (strain ATCC 49882 / DSM 28221 / CCUG 30454 / Houston 1) (Rochalimaea henselae).